Consider the following 550-residue polypeptide: Probable asparagine synthetase [glutamine-hydrolyzing] (550 aa).

Cys-2 functions as the For GATase activity in the catalytic mechanism. One can recognise a Glutamine amidotransferase type-2 domain in the interval 2 to 189; sequence CGIICFIQYG…PNQYVTIDLS (188 aa). L-glutamine-binding positions include 53 to 57, 78 to 80, and Asp-100; these read RLAIM and NGE. The Asparagine synthetase domain maps to 213-530; the sequence is YYQSHKSLID…GGRDHIIPHY (318 aa). Residues Leu-256, Val-284, and 360–361 each bind ATP; that span reads SG.

It catalyses the reaction L-aspartate + L-glutamine + ATP + H2O = L-asparagine + L-glutamate + AMP + diphosphate + H(+). It participates in amino-acid biosynthesis; L-asparagine biosynthesis; L-asparagine from L-aspartate (L-Gln route): step 1/1. The sequence is that of Probable asparagine synthetase [glutamine-hydrolyzing] from Acanthamoeba polyphaga mimivirus (APMV).